The following is a 290-amino-acid chain: Ribosomal RNA small subunit methyltransferase A (290 aa).

Residues N27, L29, G54, E75, D100, and N125 each coordinate S-adenosyl-L-methionine.

Belongs to the class I-like SAM-binding methyltransferase superfamily. rRNA adenine N(6)-methyltransferase family. RsmA subfamily.

It localises to the cytoplasm. It catalyses the reaction adenosine(1518)/adenosine(1519) in 16S rRNA + 4 S-adenosyl-L-methionine = N(6)-dimethyladenosine(1518)/N(6)-dimethyladenosine(1519) in 16S rRNA + 4 S-adenosyl-L-homocysteine + 4 H(+). Its function is as follows. Specifically dimethylates two adjacent adenosines (A1518 and A1519) in the loop of a conserved hairpin near the 3'-end of 16S rRNA in the 30S particle. May play a critical role in biogenesis of 30S subunits. In Streptococcus gordonii (strain Challis / ATCC 35105 / BCRC 15272 / CH1 / DL1 / V288), this protein is Ribosomal RNA small subunit methyltransferase A.